We begin with the raw amino-acid sequence, 534 residues long: Ulvan lyase NLR42 (534 aa).

The signal sequence occupies residues 1–47 (MVFFKDLFIFKSLIKGSLYSGHMKKKLLNYLPLFALMLFTVSMMAQT). A disulfide bond links Cys59 and Cys89. Ca(2+)-binding residues include Gly63, Asn68, Asp86, Thr88, Ala91, and Asp92. Tyr164 serves as a coordination point for substrate. Lys169 (proton acceptor) is an active-site residue. Substrate contacts are provided by residues 218 to 223 (SGAAGR) and 288 to 291 (YRVK). Tyr288 serves as the catalytic Proton donor/acceptor. Residues 316–449 (PAADIYRIKN…SKWNLESTTL (134 aa)) form a ulvan-binding domain region. A propeptide spans 450–534 (SVDSQQIASV…KVYQTKLIVN (85 aa)) (removed by the type IX secretion system (T9SS)).

It belongs to the polysaccharide lyase 28 family. Ca(2+) is required as a cofactor.

It localises to the secreted. Ulvan lyase involved in ulvan degradation. Ulvan is the main polysaccharide component of the Ulvales (green seaweed) cell wall. It is composed of disaccharide building blocks comprising 3-sulfated rhamnose (Rha3S) linked to D-glucuronic acid (GlcA), L-iduronic acid (IduA), or D-xylose (Xyl). Ulvan lyase catalyzes the endolytic cleavage of the glycosidic bond between Rha3S and the uronic acids GlcA or IduA, producing oligosaccharides that have unsaturated 4-deoxy-L-threo-hex-4-enopyranosiduronic acid (deltaUA) at the non-reducing end. This results eventually in the degradation of the ulvan polysaccharide into deltaUA-Rha3S disaccharides and deltaUA-Rha3S-Xyl-Rha3S tetrasaccharides. This Nonlabens ulvanivorans (Persicivirga ulvanivorans) protein is Ulvan lyase NLR42.